The primary structure comprises 220 residues: Protein GrpE (220 aa).

Composition is skewed to polar residues over residues 1–12 and 50–63; these read MEQGDKQATYNE and AASTTADPAEQTSV. The segment at 1-67 is disordered; that stretch reads MEQGDKQATY…AEQTSVEAEE (67 aa).

This sequence belongs to the GrpE family. As to quaternary structure, homodimer.

The protein localises to the cytoplasm. Participates actively in the response to hyperosmotic and heat shock by preventing the aggregation of stress-denatured proteins, in association with DnaK and GrpE. It is the nucleotide exchange factor for DnaK and may function as a thermosensor. Unfolded proteins bind initially to DnaJ; upon interaction with the DnaJ-bound protein, DnaK hydrolyzes its bound ATP, resulting in the formation of a stable complex. GrpE releases ADP from DnaK; ATP binding to DnaK triggers the release of the substrate protein, thus completing the reaction cycle. Several rounds of ATP-dependent interactions between DnaJ, DnaK and GrpE are required for fully efficient folding. In Geobacillus thermodenitrificans (strain NG80-2), this protein is Protein GrpE.